Consider the following 317-residue polypeptide: Beta-ketoacyl-[acyl-carrier-protein] synthase III (317 aa).

Active-site residues include Cys-112 and His-244. The segment at 245–249 (QANLR) is ACP-binding. Asn-274 is an active-site residue.

Belongs to the thiolase-like superfamily. FabH family. As to quaternary structure, homodimer.

It localises to the cytoplasm. The enzyme catalyses malonyl-[ACP] + acetyl-CoA + H(+) = 3-oxobutanoyl-[ACP] + CO2 + CoA. It participates in lipid metabolism; fatty acid biosynthesis. Its function is as follows. Catalyzes the condensation reaction of fatty acid synthesis by the addition to an acyl acceptor of two carbons from malonyl-ACP. Catalyzes the first condensation reaction which initiates fatty acid synthesis and may therefore play a role in governing the total rate of fatty acid production. Possesses both acetoacetyl-ACP synthase and acetyl transacylase activities. Its substrate specificity determines the biosynthesis of branched-chain and/or straight-chain of fatty acids. The chain is Beta-ketoacyl-[acyl-carrier-protein] synthase III from Pectobacterium atrosepticum (strain SCRI 1043 / ATCC BAA-672) (Erwinia carotovora subsp. atroseptica).